Reading from the N-terminus, the 489-residue chain is Palmitoyltransferase ZDHHC14 (489 aa).

Topologically, residues Met-1–Gln-60 are cytoplasmic. Residues Thr-61–Phe-81 form a helical membrane-spanning segment. At Asp-82–Lys-89 the chain is on the lumenal side. The helical transmembrane segment at Ile-90 to Leu-110 threads the bilayer. Over Arg-111–Arg-208 the chain is Cytoplasmic. One can recognise a DHHC domain in the interval Lys-165–Leu-215. Cys-195 (S-palmitoyl cysteine intermediate) is an active-site residue. A helical transmembrane segment spans residues Phe-209–Ile-229. The Lumenal portion of the chain corresponds to Thr-230–Ala-255. Residues Val-256–Ile-276 form a helical membrane-spanning segment. The Cytoplasmic portion of the chain corresponds to Ser-277–Val-489. Residues His-434–Ala-454 are disordered. Residue Ser-456 is modified to Phosphoserine.

Belongs to the DHHC palmitoyltransferase family. ERF2/ZDHHC9 subfamily.

Its subcellular location is the endoplasmic reticulum membrane. The protein resides in the golgi apparatus membrane. The catalysed reaction is L-cysteinyl-[protein] + hexadecanoyl-CoA = S-hexadecanoyl-L-cysteinyl-[protein] + CoA. In terms of biological role, palmitoyltransferase that could catalyze the addition of palmitate onto various protein substrates. May have a palmitoyltransferase activity toward the beta-2 adrenergic receptor/ADRB2 and thereby regulate G protein-coupled receptor signaling. May play a role in cell differentiation and apoptosis. This is Palmitoyltransferase ZDHHC14 from Mus musculus (Mouse).